An 88-amino-acid chain; its full sequence is RNA-binding protein Hfq (88 aa).

Residues 9–68 (DPFLNALRCERIPVSIYLVNGIKLQGQIESFDQFVILLKNTVNQMVYKHAISTVVPARAV) enclose the Sm domain. Residues 66–88 (RAVSHHTASDRPQGERPQETTEE) are disordered. Basic and acidic residues predominate over residues 72 to 88 (TASDRPQGERPQETTEE).

The protein belongs to the Hfq family. Homohexamer.

Its function is as follows. RNA chaperone that binds small regulatory RNA (sRNAs) and mRNAs to facilitate mRNA translational regulation in response to envelope stress, environmental stress and changes in metabolite concentrations. Also binds with high specificity to tRNAs. In Aliivibrio salmonicida (strain LFI1238) (Vibrio salmonicida (strain LFI1238)), this protein is RNA-binding protein Hfq.